Consider the following 354-residue polypeptide: Uroporphyrinogen decarboxylase (354 aa).

Residues 27–31 (RQAGR), Asp-77, Tyr-154, Thr-209, and His-327 each bind substrate.

This sequence belongs to the uroporphyrinogen decarboxylase family. As to quaternary structure, homodimer.

It is found in the cytoplasm. The enzyme catalyses uroporphyrinogen III + 4 H(+) = coproporphyrinogen III + 4 CO2. It functions in the pathway porphyrin-containing compound metabolism; protoporphyrin-IX biosynthesis; coproporphyrinogen-III from 5-aminolevulinate: step 4/4. Functionally, catalyzes the decarboxylation of four acetate groups of uroporphyrinogen-III to yield coproporphyrinogen-III. The protein is Uroporphyrinogen decarboxylase of Salmonella arizonae (strain ATCC BAA-731 / CDC346-86 / RSK2980).